The following is a 298-amino-acid chain: Protoheme IX farnesyltransferase (298 aa).

8 helical membrane-spanning segments follow: residues 16-36 (VVALIVFTALVGMFLAIPGMP), 45-65 (ALGFLGIWLAASAAAAINQLL), 97-117 (VLIVISMTILVVWVNVITAVL), 141-161 (IVIGGLAGATPPMLGWAAVTG), 172-192 (SLLVLIIFIWTPPHFWALAIF), 223-243 (VLLAIVTLLPVAVGMSGVFYL), 244-264 (GGAVVLNAVFLWYAWRMLDPP), and 277-297 (VVYLMALFAFLMVDHLLLPWV).

Belongs to the UbiA prenyltransferase family. Protoheme IX farnesyltransferase subfamily.

It is found in the cell inner membrane. The enzyme catalyses heme b + (2E,6E)-farnesyl diphosphate + H2O = Fe(II)-heme o + diphosphate. It participates in porphyrin-containing compound metabolism; heme O biosynthesis; heme O from protoheme: step 1/1. Converts heme B (protoheme IX) to heme O by substitution of the vinyl group on carbon 2 of heme B porphyrin ring with a hydroxyethyl farnesyl side group. This is Protoheme IX farnesyltransferase from Xanthomonas campestris pv. campestris (strain 8004).